The following is a 125-amino-acid chain: Glycine cleavage system H protein (125 aa).

A Lipoyl-binding domain is found at 22–104 (SYIIGITDFA…YDTGWILKLT (83 aa)). Residue lysine 63 is modified to N6-lipoyllysine.

The protein belongs to the GcvH family. As to quaternary structure, the glycine cleavage system is composed of four proteins: P, T, L and H. (R)-lipoate serves as cofactor.

Functionally, the glycine cleavage system catalyzes the degradation of glycine. The H protein shuttles the methylamine group of glycine from the P protein to the T protein. Is also involved in protein lipoylation via its role as an octanoyl/lipoyl carrier protein intermediate. This is Glycine cleavage system H protein from Listeria innocua serovar 6a (strain ATCC BAA-680 / CLIP 11262).